A 189-amino-acid chain; its full sequence is UPF0301 protein CTLon_0458 (189 aa).

It belongs to the UPF0301 (AlgH) family.

In Chlamydia trachomatis serovar L2b (strain UCH-1/proctitis), this protein is UPF0301 protein CTLon_0458.